The following is a 614-amino-acid chain: UvrABC system protein C (614 aa).

The GIY-YIG domain occupies 14-91 (TSPGCYIHKD…IKENKPKYNI (78 aa)). Positions 196-231 (DKIIDDLKSKMAVAAQSMEFERAAEYRDLIQAIGTL) constitute a UVR domain. The interval 595–614 (LPQVAEERVDYQTEGNHNEP) is disordered. The span at 599-614 (AEERVDYQTEGNHNEP) shows a compositional bias: basic and acidic residues.

The protein belongs to the UvrC family. In terms of assembly, interacts with UvrB in an incision complex.

The protein resides in the cytoplasm. In terms of biological role, the UvrABC repair system catalyzes the recognition and processing of DNA lesions. UvrC both incises the 5' and 3' sides of the lesion. The N-terminal half is responsible for the 3' incision and the C-terminal half is responsible for the 5' incision. This Streptococcus pneumoniae serotype 4 (strain ATCC BAA-334 / TIGR4) protein is UvrABC system protein C.